Here is a 356-residue protein sequence, read N- to C-terminus: S-adenosylmethionine:tRNA ribosyltransferase-isomerase (356 aa).

This sequence belongs to the QueA family. Monomer.

It is found in the cytoplasm. It catalyses the reaction 7-aminomethyl-7-carbaguanosine(34) in tRNA + S-adenosyl-L-methionine = epoxyqueuosine(34) in tRNA + adenine + L-methionine + 2 H(+). The protein operates within tRNA modification; tRNA-queuosine biosynthesis. Functionally, transfers and isomerizes the ribose moiety from AdoMet to the 7-aminomethyl group of 7-deazaguanine (preQ1-tRNA) to give epoxyqueuosine (oQ-tRNA). The protein is S-adenosylmethionine:tRNA ribosyltransferase-isomerase of Yersinia pseudotuberculosis serotype O:3 (strain YPIII).